The sequence spans 64 residues: OPG024 protein (64 aa).

A disordered region spans residues 1–64 (MSSKGGSSGG…GGVKSGTGKI (64 aa)). A compositionally biased stretch (low complexity) spans 23–34 (NKGSKTYTSSGS). Residues 49–64 (VNGGVNGGVKSGTGKI) are compositionally biased toward gly residues.

This sequence belongs to the orthopoxvirus OPG024 family.

The polypeptide is OPG024 protein (OPG023) (Cynomys gunnisoni (Gunnison's prairie dog)).